We begin with the raw amino-acid sequence, 667 residues long: Transketolase 2 (667 aa).

Substrate is bound at residue histidine 25. Thiamine diphosphate contacts are provided by residues histidine 65 and 113–115 (GPL). Aspartate 154 is a Mg(2+) binding site. 2 residues coordinate thiamine diphosphate: glycine 155 and asparagine 184. Positions 184 and 186 each coordinate Mg(2+). Histidine 260 is a binding site for substrate. Histidine 260 lines the thiamine diphosphate pocket. Lysine 342 bears the N6-acetyllysine mark. Arginine 357 and serine 384 together coordinate substrate. The active-site Proton donor is glutamate 410. Thiamine diphosphate is bound at residue phenylalanine 436. The substrate site is built by histidine 460, aspartate 468, and arginine 519.

It belongs to the transketolase family. In terms of assembly, homodimer. The cofactor is Mg(2+). It depends on Ca(2+) as a cofactor. Mn(2+) is required as a cofactor. Requires Co(2+) as cofactor. Thiamine diphosphate serves as cofactor.

The enzyme catalyses D-sedoheptulose 7-phosphate + D-glyceraldehyde 3-phosphate = aldehydo-D-ribose 5-phosphate + D-xylulose 5-phosphate. Functionally, catalyzes the reversible transfer of a two-carbon ketol group from sedoheptulose-7-phosphate to glyceraldehyde-3-phosphate, producing xylulose-5-phosphate and ribose-5-phosphate. Catalyzes the transfer of a two-carbon ketol group from a ketose donor to an aldose acceptor, via a covalent intermediate with the cofactor thiamine pyrophosphate. The sequence is that of Transketolase 2 from Escherichia coli (strain K12).